The sequence spans 391 residues: Metal tolerance protein 7 (391 aa).

The interval 1–21 (MGSRGRRGGGERETETEEDET) is disordered. At 1–103 (MGSRGRRGGG…LRQMAKGERL (103 aa)) the chain is on the cytoplasmic side. Residues 104-124 (AINLSNIINLILFIGKVLASV) traverse the membrane as a helical segment. The Vacuolar segment spans residues 125–134 (ESLSMAVIAS). Residues 135–155 (TLDSLLDLLSGFILWFTAHAM) form a helical membrane-spanning segment. Residues 156–171 (KKPNKYSYPIGKRRMQ) are Cytoplasmic-facing. A helical transmembrane segment spans residues 172–192 (PVGIIVFASVMGTLGFQVLIE). Topologically, residues 193–210 (SGRQLITNEHQVFDHRKE) are vacuolar. A helical transmembrane segment spans residues 211–231 (LWMIGSMSSVAVVKFFLMLYC). Topologically, residues 232 to 246 (RSFKNEIVRAYAQDH) are cytoplasmic. The helical transmembrane segment at 247–264 (FFDVITNSVGLVSALLAV) threads the bilayer. The Vacuolar portion of the chain corresponds to 265 to 266 (RY). Residues 267 to 287 (KWWMDPVGAILIAVYTITTWA) form a helical membrane-spanning segment. The Cytoplasmic segment spans residues 288–391 (RTVVENVGTL…THRPEHKAEV (104 aa)).

The protein belongs to the cation diffusion facilitator (CDF) transporter (TC 2.A.4) family. SLC30A subfamily.

It localises to the vacuole membrane. Its function is as follows. Involved in sequestration of excess metal in the cytoplasm into vacuoles to maintain metal homeostasis. This Oryza sativa subsp. japonica (Rice) protein is Metal tolerance protein 7 (MTP7).